The following is a 529-amino-acid chain: Autoinducer-2 kinase (529 aa).

It belongs to the FGGY kinase family.

It is found in the cytoplasm. The enzyme catalyses (S)-4,5-dihydroxypentane-2,3-dione + ATP = (2S)-2-hydroxy-3,4-dioxopentyl phosphate + ADP + H(+). In terms of biological role, catalyzes the phosphorylation of autoinducer-2 (AI-2) to phospho-AI-2, which subsequently inactivates the transcriptional regulator LsrR and leads to the transcription of the lsr operon. Phosphorylates the ring-open form of (S)-4,5-dihydroxypentane-2,3-dione (DPD), which is the precursor to all AI-2 signaling molecules, at the C5 position. The polypeptide is Autoinducer-2 kinase (Yersinia enterocolitica serotype O:8 / biotype 1B (strain NCTC 13174 / 8081)).